The chain runs to 150 residues: Nitric oxide reductase subunit C (150 aa).

The helical; Signal-anchor transmembrane segment at 13-29 (IFYGGSLFFFLLFAALT) threads the bilayer. Heme c-binding residues include cysteine 62, cysteine 65, and histidine 66.

Heterodimer of cytochromes b (large subunit) and c (small subunit).

The protein localises to the cell membrane. Functionally, component of the anaerobic respiratory chain that transforms nitrate to dinitrogen (denitrification). The polypeptide is Nitric oxide reductase subunit C (norC) (Halomonas halodenitrificans (Paracoccus halodenitrificans)).